Here is a 342-residue protein sequence, read N- to C-terminus: S-adenosylmethionine:tRNA ribosyltransferase-isomerase (342 aa).

Belongs to the QueA family. In terms of assembly, monomer.

The protein localises to the cytoplasm. It carries out the reaction 7-aminomethyl-7-carbaguanosine(34) in tRNA + S-adenosyl-L-methionine = epoxyqueuosine(34) in tRNA + adenine + L-methionine + 2 H(+). It participates in tRNA modification; tRNA-queuosine biosynthesis. In terms of biological role, transfers and isomerizes the ribose moiety from AdoMet to the 7-aminomethyl group of 7-deazaguanine (preQ1-tRNA) to give epoxyqueuosine (oQ-tRNA). In Listeria monocytogenes serotype 4b (strain F2365), this protein is S-adenosylmethionine:tRNA ribosyltransferase-isomerase.